A 537-amino-acid polypeptide reads, in one-letter code: Phosphoenolpyruvate carboxykinase (ATP) (537 aa).

3 residues coordinate substrate: arginine 61, tyrosine 195, and lysine 201. ATP contacts are provided by residues lysine 201, histidine 220, and 236–244 (GLSGTGKTT). Mn(2+) is bound by residues lysine 201 and histidine 220. Aspartate 257 serves as a coordination point for Mn(2+). ATP is bound by residues glutamate 285, arginine 323, and threonine 448. A substrate-binding site is contributed by arginine 323.

This sequence belongs to the phosphoenolpyruvate carboxykinase (ATP) family. It depends on Mn(2+) as a cofactor.

It localises to the cytoplasm. It catalyses the reaction oxaloacetate + ATP = phosphoenolpyruvate + ADP + CO2. It participates in carbohydrate biosynthesis; gluconeogenesis. In terms of biological role, involved in the gluconeogenesis. Catalyzes the conversion of oxaloacetate (OAA) to phosphoenolpyruvate (PEP) through direct phosphoryl transfer between the nucleoside triphosphate and OAA. This is Phosphoenolpyruvate carboxykinase (ATP) from Rhodopseudomonas palustris (strain ATCC BAA-98 / CGA009).